We begin with the raw amino-acid sequence, 275 residues long: 4-hydroxy-tetrahydrodipicolinate reductase (275 aa).

NAD(+)-binding positions include G13 to M18, G108 to T110, and A134 to F137. The active-site Proton donor/acceptor is H164. H165 is a binding site for (S)-2,3,4,5-tetrahydrodipicolinate. K168 serves as the catalytic Proton donor. G174–T175 contributes to the (S)-2,3,4,5-tetrahydrodipicolinate binding site.

The protein belongs to the DapB family.

The protein localises to the cytoplasm. The catalysed reaction is (S)-2,3,4,5-tetrahydrodipicolinate + NAD(+) + H2O = (2S,4S)-4-hydroxy-2,3,4,5-tetrahydrodipicolinate + NADH + H(+). It catalyses the reaction (S)-2,3,4,5-tetrahydrodipicolinate + NADP(+) + H2O = (2S,4S)-4-hydroxy-2,3,4,5-tetrahydrodipicolinate + NADPH + H(+). The protein operates within amino-acid biosynthesis; L-lysine biosynthesis via DAP pathway; (S)-tetrahydrodipicolinate from L-aspartate: step 4/4. Its function is as follows. Catalyzes the conversion of 4-hydroxy-tetrahydrodipicolinate (HTPA) to tetrahydrodipicolinate. The polypeptide is 4-hydroxy-tetrahydrodipicolinate reductase (Synechocystis sp. (strain ATCC 27184 / PCC 6803 / Kazusa)).